The following is a 452-amino-acid chain: Pup--protein ligase (452 aa).

Glutamate 9 contacts Mg(2+). Residue arginine 53 coordinates ATP. Tyrosine 55 contacts Mg(2+). Aspartate 57 functions as the Proton acceptor in the catalytic mechanism. Mg(2+) is bound at residue glutamate 63. The ATP site is built by threonine 66 and tryptophan 419.

This sequence belongs to the Pup ligase/Pup deamidase family. Pup-conjugating enzyme subfamily.

It catalyses the reaction ATP + [prokaryotic ubiquitin-like protein]-L-glutamate + [protein]-L-lysine = ADP + phosphate + N(6)-([prokaryotic ubiquitin-like protein]-gamma-L-glutamyl)-[protein]-L-lysine.. Its pathway is protein degradation; proteasomal Pup-dependent pathway. The protein operates within protein modification; protein pupylation. Its function is as follows. Catalyzes the covalent attachment of the prokaryotic ubiquitin-like protein modifier Pup to the proteasomal substrate proteins, thereby targeting them for proteasomal degradation. This tagging system is termed pupylation. The ligation reaction involves the side-chain carboxylate of the C-terminal glutamate of Pup and the side-chain amino group of a substrate lysine. This Saccharomonospora viridis (strain ATCC 15386 / DSM 43017 / JCM 3036 / CCUG 5913 / NBRC 12207 / NCIMB 9602 / P101) (Thermoactinomyces viridis) protein is Pup--protein ligase.